The following is a 481-amino-acid chain: MSIPAVPSPQIAVNDVGSSEDFLAAIDKTIKYFNDGDIVEGTIVKVDRDEVLLDIGYKTEGVIPARELSIKHDVDPNEVVSVGDEVEALVLTKEDKEGRLILSKKRAQYERAWGTIEALKEKDEAVKGIVIEVVKGGLILDIGLRGFLPASLVEMRRVRDLQPYIGKEIEAKIIELDKNRNNVVLSRRAWLEQTQSEVRSEFLNQLQKGAIRKGVVSSIVNFGAFVDLGGVDGLVHVSELSWKHIDHPSEVVQVGNEVTVEVLDVDMDRERVSLSLKATQEDPWRHFARTHAIGQIVPGKVTKLVPFGAFVRVEEGIEGLVHISELAERHVEVPDQVVAVGDDAMVKVIDIDLERRRISLSLKQANEDYIEEFDPAKYGMADSYDEQGNYIFPEGFDPDSNEWLEGFDTQRAEWEARYAEAERRYKMHTIQMEKFAATEEAGHGSSEQPPASSTPSAKATGGSLASDAQLAALREKLAGSA.

S1 motif domains follow at residues 36 to 105 (GDIV…LSKK), 123 to 188 (DEAV…LSRR), 209 to 277 (GAIR…LSLK), and 294 to 363 (GQIV…LSLK). Positions 437-465 (ATEEAGHGSSEQPPASSTPSAKATGGSLA) are disordered. Positions 445–457 (SSEQPPASSTPSA) are enriched in polar residues.

It belongs to the bacterial ribosomal protein bS1 family.

Binds mRNA; thus facilitating recognition of the initiation point. It is needed to translate mRNA with a short Shine-Dalgarno (SD) purine-rich sequence. The chain is Small ribosomal subunit protein bS1 (rpsA) from Mycobacterium leprae (strain TN).